The sequence spans 91 residues: Large ribosomal subunit protein bL27 (91 aa).

The tract at residues 1–21 (MAHKKSGGSSRNGRDSAGRRL) is disordered.

This sequence belongs to the bacterial ribosomal protein bL27 family.

This Phenylobacterium zucineum (strain HLK1) protein is Large ribosomal subunit protein bL27.